The primary structure comprises 564 residues: Protein CPR-5 (564 aa).

Residues 1–87 (MEALLLPPSP…TSNSNSTKRV (87 aa)) form a disordered region. A compositionally biased stretch (polar residues) spans 12–28 (PQNQITNPANSKPNHQS). Residues 29–38 (GDVHKDETMM) show a composition bias toward basic and acidic residues. Over residues 69-84 (SSSYCSTSSTSNSNST) the composition is skewed to low complexity. The next 5 helical transmembrane spans lie at 347 to 367 (IMDWLLVSVFSMLASMVLGVY), 411 to 431 (VRVWVQIFFGVLMIIVFTYFL), 443 to 463 (PISFIVLFLGIFCGVSGKLCV), 472 to 492 (LWLIVWEVFCLLQFVANVFTL), and 526 to 546 (VYVVILFVLPVINGLLPFATF).

In terms of assembly, interacts with SIM and SMR1. Ubiquitous.

Its subcellular location is the membrane. The protein resides in the nucleus membrane. May play a role in transcriptional processes. Negatively regulates the senescence and chlorotic lesions induced by biotic (e.g. pathogens) and abiotic (e.g. sugars, darkness) agents, probably by controlling programmed cell death (pcd). Negative regulator of plant programmed cell death (PCD) and effector-triggered immunity (ETI). Promotes cell division and endoreduplication (e.g. in trichomes). This is Protein CPR-5 from Arabidopsis thaliana (Mouse-ear cress).